The chain runs to 953 residues: Anion exchange protein 4 (953 aa).

Positions 20-41 (SEQLDGDLGPGSGLDGPSDIDN) are disordered. The next 4 helical transmembrane spans lie at 385–405 (AVLY…GLLG), 413–433 (GVLE…LMAG), 470–490 (VGIW…SLLV), and 501–521 (FCAL…LNLI). Residues 385-953 (AVLYIYLATV…KAPEINISVN (569 aa)) form a membrane (anion exchange) region. Asparagine 546 and asparagine 570 each carry an N-linked (GlcNAc...) asparagine glycan. A run of 7 helical transmembrane segments spans residues 594-614 (VPDI…CAIA), 635-655 (FSSV…GLAT), 682-702 (PWWL…LIFM), 728-748 (LFCV…WYVS), 785-805 (GLVV…LKFI), 807-827 (MPVL…SMQF), and 869-889 (LWVI…LGLV). The segment covering 916 to 927 (KTIPENRPEPEH) has biased composition (basic and acidic residues). The interval 916–938 (KTIPENRPEPEHLFSGNDSENSE) is disordered. N-linked (GlcNAc...) asparagine glycans are attached at residues asparagine 932 and asparagine 949.

The protein belongs to the anion exchanger (TC 2.A.31) family. As to expression, expressed in kidney and gastrointestinal tract. In kidney, it is highly expressed in the cortex, expressed at intermediate level in the outer medulla and not expressed in the inner medulla. It is expressed in the cecum, while it is absent in other segments of gastrointestinal tract. Highly expressed in the cortical collecting duct (CCD). Expressed in both alpha-intercalated cells and beta-intercalated cells in the CCD (at protein level).

Its subcellular location is the basolateral cell membrane. It carries out the reaction 2 hydrogencarbonate(out) + chloride(in) + Na(+)(out) = 2 hydrogencarbonate(in) + chloride(out) + Na(+)(in). It catalyses the reaction K(+)(in) + 2 hydrogencarbonate(in) + chloride(out) = K(+)(out) + 2 hydrogencarbonate(out) + chloride(in). The enzyme catalyses Li(+)(in) + 2 hydrogencarbonate(in) + chloride(out) = Li(+)(out) + 2 hydrogencarbonate(out) + chloride(in). The catalysed reaction is Rb(+)(in) + 2 hydrogencarbonate(in) + chloride(out) = Rb(+)(out) + 2 hydrogencarbonate(out) + chloride(in). It carries out the reaction Cs(+)(in) + 2 hydrogencarbonate(in) + chloride(out) = Cs(+)(out) + 2 hydrogencarbonate(out) + chloride(in). 4,4'-diisothiocyanatodihydrostilbene-2,2'- disulfonic acid (H2DIDS) potently inhibits chloride/hydrogencarbonate antiporter activity with 50% inhibition at about 5 uM. Completely inhibits chloride/hydrogencarbonate antiporter activity at 200 uM of 4,4'-diisothiocyano-trans-stilbene-2,2'-disulfonic acid (DIDS). Functionally, electroneutral Cl(-)/HCO3(-) antiporter that favors chloride ion entry and efflux of hydrogencarbonate and sodium ion across the basolateral membrane and may participate in salivary secretion. Also mediates Cl(-)/HCO3(-) exchange activity in the presence of K(+) as well as Cs(+), Li(+), and Rb(+). Does not contribute to Cl(-)/HCO3(-) exchanger in the apical membrane of the upper villous epithelium. The sequence is that of Anion exchange protein 4 from Rattus norvegicus (Rat).